The primary structure comprises 1235 residues: ATP-dependent helicase/nuclease subunit A (1235 aa).

The region spanning 4 to 470 (REYTLSQKQA…IILAENFRSM (467 aa)) is the UvrD-like helicase ATP-binding domain. 25–32 (ASAGSGKT) lines the ATP pocket. The region spanning 501–795 (QFGAKYYPDE…KLMTIHGSKG (295 aa)) is the UvrD-like helicase C-terminal domain.

The protein belongs to the helicase family. AddA subfamily. Heterodimer of AddA and AddB/RexB. Mg(2+) is required as a cofactor.

It catalyses the reaction Couples ATP hydrolysis with the unwinding of duplex DNA by translocating in the 3'-5' direction.. The catalysed reaction is ATP + H2O = ADP + phosphate + H(+). In terms of biological role, the heterodimer acts as both an ATP-dependent DNA helicase and an ATP-dependent, dual-direction single-stranded exonuclease. Recognizes the chi site generating a DNA molecule suitable for the initiation of homologous recombination. The AddA nuclease domain is required for chi fragment generation; this subunit has the helicase and 3' -&gt; 5' nuclease activities. This chain is ATP-dependent helicase/nuclease subunit A, found in Pediococcus pentosaceus (strain ATCC 25745 / CCUG 21536 / LMG 10740 / 183-1w).